The following is a 501-amino-acid chain: Aspartyl/glutamyl-tRNA(Asn/Gln) amidotransferase subunit B (501 aa).

This sequence belongs to the GatB/GatE family. GatB subfamily. As to quaternary structure, heterotrimer of A, B and C subunits.

It carries out the reaction L-glutamyl-tRNA(Gln) + L-glutamine + ATP + H2O = L-glutaminyl-tRNA(Gln) + L-glutamate + ADP + phosphate + H(+). The catalysed reaction is L-aspartyl-tRNA(Asn) + L-glutamine + ATP + H2O = L-asparaginyl-tRNA(Asn) + L-glutamate + ADP + phosphate + 2 H(+). Its function is as follows. Allows the formation of correctly charged Asn-tRNA(Asn) or Gln-tRNA(Gln) through the transamidation of misacylated Asp-tRNA(Asn) or Glu-tRNA(Gln) in organisms which lack either or both of asparaginyl-tRNA or glutaminyl-tRNA synthetases. The reaction takes place in the presence of glutamine and ATP through an activated phospho-Asp-tRNA(Asn) or phospho-Glu-tRNA(Gln). This chain is Aspartyl/glutamyl-tRNA(Asn/Gln) amidotransferase subunit B, found in Mycobacterium sp. (strain KMS).